Reading from the N-terminus, the 396-residue chain is Cathepsin D (396 aa).

Positions 1-18 (MKMLLLCVFSALALTNDA) are cleaved as a signal peptide. A propeptide spans 19–61 (LVRIPLKKFRSIRRQLTDSGKRAEELLADHHSLKYNLSFPASN) (activation peptide). A Peptidase A1 domain is found at 76-393 (YYGEIGLGTP…DRDANRVGFA (318 aa)). Asp-94 is an active-site residue. Residues Cys-107 and Cys-114 are joined by a disulfide bond. N-linked (GlcNAc...) asparagine glycans are attached at residues Asn-131 and Asn-249. A disulfide bridge links Cys-272 with Cys-276. Asp-281 is a catalytic residue. Cys-315 and Cys-352 are joined by a disulfide.

Belongs to the peptidase A1 family. In terms of assembly, monomer.

The protein resides in the lysosome. The catalysed reaction is Specificity similar to, but narrower than, that of pepsin A. Does not cleave the 4-Gln-|-His-5 bond in B chain of insulin.. Inhibited by pepstatin. Functionally, acid protease active in intracellular protein breakdown. This is Cathepsin D (ctsd) from Chionodraco hamatus (Antarctic teleost icefish).